Here is a 589-residue protein sequence, read N- to C-terminus: Protein POF1B (589 aa).

A coiled-coil region spans residues Thr-334–Thr-443.

As to quaternary structure, interacts with nonmuscle actin.

It localises to the cell junction. The protein localises to the tight junction. Functionally, plays a key role in the organization of epithelial monolayers by regulating the actin cytoskeleton. May be involved in ovary development. This Homo sapiens (Human) protein is Protein POF1B (POF1B).